Consider the following 146-residue polypeptide: Vascular endothelial growth factor A (146 aa).

An N-terminal signal peptide occupies residues 1–26 (MNFLLSWVHWSLALLLYLHHAKWSQA). Disulfide bonds link cysteine 51/cysteine 93, cysteine 82/cysteine 127, and cysteine 86/cysteine 129. Asparagine 100 carries N-linked (GlcNAc...) asparagine glycosylation.

It belongs to the PDGF/VEGF growth factor family. Homodimer; disulfide-linked. Also found as heterodimer with PGF. Interacts with NRP1. Interacts with isoform 2 of BSG. Interacts with CD82; this interaction inhibits VEGFA-mediated signaling pathway.

Growth factor active in angiogenesis, vasculogenesis and endothelial cell growth. Induces endothelial cell proliferation, promotes cell migration, inhibits apoptosis and induces permeabilization of blood vessels. Binds to the FLT1/VEGFR1 and KDR/VEGFR2 receptors, heparan sulfate and heparin. Binding to NRP1 receptor initiates a signaling pathway needed for motor neuron axon guidance and cell body migration, including for the caudal migration of facial motor neurons from rhombomere 4 to rhombomere 6 during embryonic development. Also binds the DEAR/FBXW7-AS1 receptor. In Ovis aries (Sheep), this protein is Vascular endothelial growth factor A (VEGFA).